Consider the following 1369-residue polypeptide: DNA-directed RNA polymerase subunit beta (1369 aa).

This sequence belongs to the RNA polymerase beta chain family. As to quaternary structure, the RNAP catalytic core consists of 2 alpha, 1 beta, 1 beta' and 1 omega subunit. When a sigma factor is associated with the core the holoenzyme is formed, which can initiate transcription.

It catalyses the reaction RNA(n) + a ribonucleoside 5'-triphosphate = RNA(n+1) + diphosphate. In terms of biological role, DNA-dependent RNA polymerase catalyzes the transcription of DNA into RNA using the four ribonucleoside triphosphates as substrates. The protein is DNA-directed RNA polymerase subunit beta of Solidesulfovibrio magneticus (strain ATCC 700980 / DSM 13731 / RS-1) (Desulfovibrio magneticus).